The following is a 538-amino-acid chain: AAA ATPase forming ring-shaped complexes (538 aa).

The stretch at 14-54 (ARELRLANHRLGAQNEKLTEALKASREKLAEINSRLADMAE) forms a coiled coil. Position 240–245 (240–245 (GNGKTL)) interacts with ATP.

The protein belongs to the AAA ATPase family. As to quaternary structure, homohexamer. Assembles into a hexameric ring structure.

This Corynebacterium urealyticum (strain ATCC 43042 / DSM 7109) protein is AAA ATPase forming ring-shaped complexes.